A 252-amino-acid chain; its full sequence is 3-dehydroquinate dehydratase (252 aa).

3-dehydroquinate is bound by residues Ser-21, 46–48 (EWR), and Arg-82. His-143 (proton donor/acceptor) is an active-site residue. The active-site Schiff-base intermediate with substrate is Lys-170. 3 residues coordinate 3-dehydroquinate: Arg-213, Ser-232, and Gln-236.

Belongs to the type-I 3-dehydroquinase family. Homodimer.

The catalysed reaction is 3-dehydroquinate = 3-dehydroshikimate + H2O. It functions in the pathway metabolic intermediate biosynthesis; chorismate biosynthesis; chorismate from D-erythrose 4-phosphate and phosphoenolpyruvate: step 3/7. Functionally, involved in the third step of the chorismate pathway, which leads to the biosynthesis of aromatic amino acids. Catalyzes the cis-dehydration of 3-dehydroquinate (DHQ) and introduces the first double bond of the aromatic ring to yield 3-dehydroshikimate. This is 3-dehydroquinate dehydratase from Escherichia coli (strain SE11).